Here is a 385-residue protein sequence, read N- to C-terminus: 6-hydroxynicotinate 3-monooxygenase (385 aa).

A signal peptide spans methionine 1–alanine 20. FAD-binding positions include glycine 15, glutamate 34–glutamine 35, histidine 47, arginine 108, and leucine 130. The active-site Proton acceptor is the histidine 47. Residue tyrosine 215 is the Proton acceptor of the active site. Residues aspartate 294 and alanine 307–alanine 308 each bind FAD.

This sequence belongs to the 6-hydroxynicotinate 3-monooxygenase family. Monomer. The cofactor is FAD.

The enzyme catalyses 6-hydroxynicotinate + NADH + O2 + 2 H(+) = 2,5-dihydroxypyridine + CO2 + NAD(+) + H2O. Its activity is regulated as follows. Inhibited competitively by nicotinic acid with a Ki of 0.49 mM. Inhibited by thiol-specific compounds p-chloromercuribenzoate, DTNB, Ag(2)SO(4), HgCl(2), CuCl(2) and N-ethylmaleimide. No inhibition by o-phenanthroline, 8-hydroxyquinoline, EDTA, disodium 4,5-dihydroxy-m-benzenedisulfonate, fluoride, azide, KCl, LiCl, NaCl, BaCl(2), MnCl(2), MgCl(2), PBCl, ZnCl(2), CoCl(2), SnCl(2), FeSO(4), FeCl(3), NiCl(2), CdCl(2), AlCl(3), iodoacetic acid, hydro-xylamine, phenylhydrazine, semicarbazide, cysteamine, alpha,alpha-dipyridyl and urea. Flavin-dependent monooxygenase (FMO) that catalyzes the decarboxylative hydroxylation of 6-hydroxynicotinic acid (6-HNA) to 2,5-dihydroxypyridine (2,5-DHP) with concomitant oxidation of NADH, a step in the aerobic nicotinate degradation pathway. Uses NADH in preference to NADPH as an electron donor. The chain is 6-hydroxynicotinate 3-monooxygenase (nicC) from Pseudomonas fluorescens.